Reading from the N-terminus, the 40-residue chain is Natriuretic peptide PpNP-a (40 aa).

Positions 1–8 (SGSKTANI) are excised as a propeptide. The segment at 1–40 (SGSKTANIGDGCFGVPIDHIGSTSGMGCGSPRPKPTPGGS) is disordered. Cys-12 and Cys-28 are joined by a disulfide.

The protein belongs to the natriuretic peptide family. In terms of tissue distribution, expressed by the venom gland.

It localises to the secreted. In terms of biological role, snake venom natriuretic peptide that targets both NPR1 and NPR2. Exhibits hypotensive and vasodepressor activities. The sequence is that of Natriuretic peptide PpNP-a from Pseudechis porphyriacus (Red-bellied black snake).